We begin with the raw amino-acid sequence, 67 residues long: Large ribosomal subunit protein bL31 (67 aa).

It belongs to the bacterial ribosomal protein bL31 family. Type A subfamily. In terms of assembly, part of the 50S ribosomal subunit.

Its function is as follows. Binds the 23S rRNA. The sequence is that of Large ribosomal subunit protein bL31 from Finegoldia magna (strain ATCC 29328 / DSM 20472 / WAL 2508) (Peptostreptococcus magnus).